The following is a 280-amino-acid chain: Beta-lactamase OXA-58 (280 aa).

An N-terminal signal peptide occupies residues 1–18 (MKLLKILSLVCLSISIGA). Residue cysteine 19 is the site of N-palmitoyl cysteine attachment. Cysteine 19 is lipidated: S-diacylglycerol cysteine. Residue serine 83 is the Acyl-ester intermediate of the active site. Residues serine 83, lysine 86, serine 130, serine 221, tryptophan 223, and arginine 263 each contribute to the a beta-lactam site. An N6-carboxylysine modification is found at lysine 86.

It belongs to the class-D beta-lactamase family. In terms of assembly, monomer. Dimer. Carboxylated on the epsilon-amino group of a lysine, with the resulting carbamate functional group serving as a general base. Probably N-carboxylated at Lys-86 at neutral pH in vivo and undergoes complete N-decarboxylation, at pH 4.1, in vitro. N-carboxylation at Lys-86 probably increases catalytic activity under physiological conditions.

It is found in the cell membrane. It carries out the reaction a beta-lactam + H2O = a substituted beta-amino acid. Activated approximately 3-fold by the presence of 0.1M NaHCO3. Functionally, class D beta-lactamase which confers resistance to the beta-lactam antibiotics, including penicillins and oxacillin, and moderate resistance to carbapenems such as imipenem; in the DH10B strain of E.coli. Acts via hydrolysis of the beta-lactam ring. Has benzylpenicillin-, oxacillin-, cephalothin- and imipenem-hydrolyzing activities. This chain is Beta-lactamase OXA-58, found in Acinetobacter baumannii.